The chain runs to 370 residues: Probable G-protein coupled receptor 85 (370 aa).

Topologically, residues 1–25 (MANYSHAADNILQNLSPLTAFLKLT) are extracellular. N-linked (GlcNAc...) asparagine glycosylation occurs at Asn3. Residues 26 to 46 (SLGFIIGVSVVGNLLISILLA) traverse the membrane as a helical segment. Over 47-57 (KDKTLHRAPYY) the chain is Cytoplasmic. Residues 58–78 (FLLDLCCSDILRSAICFPFVF) traverse the membrane as a helical segment. The Extracellular segment spans residues 79–96 (NSVKNGSTWTYGTLTCKV). Asn83 carries N-linked (GlcNAc...) asparagine glycosylation. Cys94 and Cys172 are disulfide-bonded. A helical transmembrane segment spans residues 97–117 (IAFLGVLSCFHTAFMLFCISV). Over 118–137 (TRYLAIAHHRFYTKRLTFWT) the chain is Cytoplasmic. Residues 138-158 (CLAVICMVWTLSVAMAFPPVL) form a helical membrane-spanning segment. The Extracellular portion of the chain corresponds to 159–188 (DVGTYSFIREEDQCTFQHRSFRANDSLGFM). The N-linked (GlcNAc...) asparagine glycan is linked to Asn182. Residues 189-209 (LLLALILLATQLVYLKLIFFV) form a helical membrane-spanning segment. Over 210-286 (HDRRKMKPVQ…FKMEKRISRM (77 aa)) the chain is Cytoplasmic. A helical transmembrane segment spans residues 287-307 (FYIMTFLFLTLWGPYLVACYW). Residues 308-313 (RVFARG) are Extracellular-facing. A helical transmembrane segment spans residues 314 to 334 (PVVPGGFLTAAVWMSFAQAGI). The Cytoplasmic portion of the chain corresponds to 335 to 370 (NPFVCIFSNRELRRCFSTTLLYCRKSRLPREPYCVI).

This sequence belongs to the G-protein coupled receptor 1 family. In terms of assembly, interacts with DLG4 and DLG3.

Its subcellular location is the cell membrane. It localises to the endoplasmic reticulum. Its function is as follows. Orphan receptor. In Pongo abelii (Sumatran orangutan), this protein is Probable G-protein coupled receptor 85 (GPR85).